Here is a 448-residue protein sequence, read N- to C-terminus: 3-phosphoshikimate 1-carboxyvinyltransferase (448 aa).

The 3-phosphoshikimate site is built by Lys-38, Ser-39, and Arg-43. Lys-38 serves as a coordination point for phosphoenolpyruvate. Residues Gly-111 and Arg-140 each coordinate phosphoenolpyruvate. 3-phosphoshikimate contacts are provided by Ser-185, Gln-187, Asp-335, and Lys-362. Residue Gln-187 participates in phosphoenolpyruvate binding. The active-site Proton acceptor is Asp-335. 2 residues coordinate phosphoenolpyruvate: Arg-366 and Arg-408.

It belongs to the EPSP synthase family. Monomer.

Its subcellular location is the cytoplasm. It catalyses the reaction 3-phosphoshikimate + phosphoenolpyruvate = 5-O-(1-carboxyvinyl)-3-phosphoshikimate + phosphate. It participates in metabolic intermediate biosynthesis; chorismate biosynthesis; chorismate from D-erythrose 4-phosphate and phosphoenolpyruvate: step 6/7. Its function is as follows. Catalyzes the transfer of the enolpyruvyl moiety of phosphoenolpyruvate (PEP) to the 5-hydroxyl of shikimate-3-phosphate (S3P) to produce enolpyruvyl shikimate-3-phosphate and inorganic phosphate. The sequence is that of 3-phosphoshikimate 1-carboxyvinyltransferase from Synechococcus elongatus (strain ATCC 33912 / PCC 7942 / FACHB-805) (Anacystis nidulans R2).